We begin with the raw amino-acid sequence, 469 residues long: Repressible acid phosphatase (469 aa).

The N-terminal stretch at 1–16 (MLSILLSLLSLSGTHA) is a signal peptide. 2 N-linked (GlcNAc...) asparagine glycosylation sites follow: Asn23 and Asn31. The active-site Nucleophile is His77. 5 N-linked (GlcNAc...) asparagine glycosylation sites follow: Asn129, Asn201, Asn229, Asn250, and Asn317. Asp340 (proton donor) is an active-site residue. N-linked (GlcNAc...) asparagine glycosylation is found at Asn392 and Asn447.

The protein belongs to the histidine acid phosphatase family. Glycosylated during secretion across the membrane.

It is found in the secreted. It carries out the reaction a phosphate monoester + H2O = an alcohol + phosphate. The protein is Repressible acid phosphatase (PHO5) of Kluyveromyces lactis (strain ATCC 8585 / CBS 2359 / DSM 70799 / NBRC 1267 / NRRL Y-1140 / WM37) (Yeast).